The primary structure comprises 117 residues: Nascent polypeptide-associated complex protein (117 aa).

The NAC-A/B domain maps to 3 to 72 (PVNPRDLEKM…YTVEKPREET (70 aa)).

It belongs to the NAC-alpha family. In terms of assembly, homodimer. Interacts with the ribosome. Binds ribosomal RNA.

In terms of biological role, contacts the emerging nascent chain on the ribosome. The protein is Nascent polypeptide-associated complex protein of Aeropyrum pernix (strain ATCC 700893 / DSM 11879 / JCM 9820 / NBRC 100138 / K1).